The sequence spans 95 residues: 6 kDa early secretory antigenic target homolog (95 aa).

It belongs to the WXG100 family. ESAT-6 subfamily. In terms of assembly, forms a tight 1:1 complex with EsxB.

The protein localises to the secreted. Its function is as follows. A secreted protein that might play a role in virulence. This is 6 kDa early secretory antigenic target homolog (esxA) from Mycobacterium leprae (strain TN).